We begin with the raw amino-acid sequence, 66 residues long: Large ribosomal subunit protein bL33c (66 aa).

This sequence belongs to the bacterial ribosomal protein bL33 family.

The protein localises to the plastid. It localises to the chloroplast. This Solanum bulbocastanum (Wild potato) protein is Large ribosomal subunit protein bL33c.